We begin with the raw amino-acid sequence, 98 residues long: Large ribosomal subunit protein uL23 (98 aa).

It belongs to the universal ribosomal protein uL23 family. In terms of assembly, part of the 50S ribosomal subunit. Contacts protein L29, and trigger factor when it is bound to the ribosome.

Its function is as follows. One of the early assembly proteins it binds 23S rRNA. One of the proteins that surrounds the polypeptide exit tunnel on the outside of the ribosome. Forms the main docking site for trigger factor binding to the ribosome. The chain is Large ribosomal subunit protein uL23 from Rickettsia bellii (strain OSU 85-389).